The primary structure comprises 214 residues: Probable nicotinate-nucleotide adenylyltransferase (214 aa).

The protein belongs to the NadD family.

It carries out the reaction nicotinate beta-D-ribonucleotide + ATP + H(+) = deamido-NAD(+) + diphosphate. Its pathway is cofactor biosynthesis; NAD(+) biosynthesis; deamido-NAD(+) from nicotinate D-ribonucleotide: step 1/1. Catalyzes the reversible adenylation of nicotinate mononucleotide (NaMN) to nicotinic acid adenine dinucleotide (NaAD). This Buchnera aphidicola subsp. Acyrthosiphon pisum (strain 5A) protein is Probable nicotinate-nucleotide adenylyltransferase.